The sequence spans 361 residues: tRNA-specific 2-thiouridylase MnmA (361 aa).

ATP contacts are provided by residues 8–15 (AMSGGVDS) and M35. The tract at residues 95–97 (NPD) is interaction with target base in tRNA. The active-site Nucleophile is the C100. Residues C100 and C196 are joined by a disulfide bond. Residue G124 participates in ATP binding. The interval 146–148 (KDQ) is interaction with tRNA. C196 acts as the Cysteine persulfide intermediate in catalysis. Positions 303–304 (RY) are interaction with tRNA.

Belongs to the MnmA/TRMU family.

It localises to the cytoplasm. It carries out the reaction S-sulfanyl-L-cysteinyl-[protein] + uridine(34) in tRNA + AH2 + ATP = 2-thiouridine(34) in tRNA + L-cysteinyl-[protein] + A + AMP + diphosphate + H(+). In terms of biological role, catalyzes the 2-thiolation of uridine at the wobble position (U34) of tRNA, leading to the formation of s(2)U34. The polypeptide is tRNA-specific 2-thiouridylase MnmA (Chlamydia felis (strain Fe/C-56) (Chlamydophila felis)).